Consider the following 232-residue polypeptide: Histone H1B (232 aa).

Residues 1–18 show a composition bias toward low complexity; sequence MSDPAVEVTPAVPVASPA. Disordered regions lie at residues 1-44 and 99-232; these read MSDP…PPVS and QTKG…AKKA. The H15 domain occupies 39–113; the sequence is THPPVSEMVV…GASGSFKLPA (75 aa). Composition is skewed to basic residues over residues 132-141, 147-173, 181-197, 205-214, and 222-232; these read KPKKAAAKPK, KVKK…KTTK, AAKK…KPKA, KRAAAPKAKK, and KAAKKPAAKKA.

Belongs to the histone H1/H5 family.

It is found in the nucleus. The protein localises to the chromosome. Functionally, histones H1 are necessary for the condensation of nucleosome chains into higher-order structures. In Chironomus tentans (Midge), this protein is Histone H1B.